The primary structure comprises 28 residues: Cyclotide vodo I3 (28 aa).

Cystine bridges form between cysteine 4–cysteine 18, cysteine 8–cysteine 20, and cysteine 13–cysteine 25.

This is a cyclic peptide. In terms of processing, contains 3 disulfide bonds.

Functionally, probably participates in a plant defense mechanism. This Viola odorata (Sweet violet) protein is Cyclotide vodo I3.